A 277-amino-acid polypeptide reads, in one-letter code: Large ribosomal subunit protein uL2 (277 aa).

The interval 222 to 277 (GSVMNPNDHPHGGGEGKSPVGHPGPLTPWGKPALGLKTRKNKKYSDKFIIKRKNKK) is disordered.

The protein belongs to the universal ribosomal protein uL2 family. Part of the 50S ribosomal subunit. Forms a bridge to the 30S subunit in the 70S ribosome.

Its function is as follows. One of the primary rRNA binding proteins. Required for association of the 30S and 50S subunits to form the 70S ribosome, for tRNA binding and peptide bond formation. It has been suggested to have peptidyltransferase activity; this is somewhat controversial. Makes several contacts with the 16S rRNA in the 70S ribosome. The sequence is that of Large ribosomal subunit protein uL2 from Clostridium kluyveri (strain NBRC 12016).